We begin with the raw amino-acid sequence, 136 residues long: Protein PsiE (136 aa).

The next 4 helical transmembrane spans lie at 15–35 (ILQT…VVFL), 55–75 (YELV…ALIV), 82–102 (FHFP…RLII), and 108–128 (PLDV…LWLC).

This sequence belongs to the PsiE family.

The protein localises to the cell inner membrane. The sequence is that of Protein PsiE from Escherichia coli (strain UTI89 / UPEC).